Here is a 353-residue protein sequence, read N- to C-terminus: Chorismate synthase (353 aa).

Arg-48 lines the NADP(+) pocket. FMN is bound by residues 128–130, Gly-280, 295–299, and Arg-321; these read RAS and KPIPS.

The protein belongs to the chorismate synthase family. As to quaternary structure, homotetramer. FMNH2 is required as a cofactor.

It catalyses the reaction 5-O-(1-carboxyvinyl)-3-phosphoshikimate = chorismate + phosphate. It functions in the pathway metabolic intermediate biosynthesis; chorismate biosynthesis; chorismate from D-erythrose 4-phosphate and phosphoenolpyruvate: step 7/7. Its function is as follows. Catalyzes the anti-1,4-elimination of the C-3 phosphate and the C-6 proR hydrogen from 5-enolpyruvylshikimate-3-phosphate (EPSP) to yield chorismate, which is the branch point compound that serves as the starting substrate for the three terminal pathways of aromatic amino acid biosynthesis. This reaction introduces a second double bond into the aromatic ring system. The sequence is that of Chorismate synthase from Nitratidesulfovibrio vulgaris (strain DSM 19637 / Miyazaki F) (Desulfovibrio vulgaris).